The chain runs to 302 residues: uncharacterized protein (302 aa).

Belongs to the HAD-like hydrolase superfamily.

Its subcellular location is the cytoplasm. The protein resides in the nucleus. This is an uncharacterized protein from Schizosaccharomyces pombe (strain 972 / ATCC 24843) (Fission yeast).